The primary structure comprises 334 residues: Large ribosomal subunit protein uL3 (334 aa).

Basic residues predominate over residues 1-10; that stretch reads MGMKKNRPRR. The tract at residues 1–21 is disordered; sequence MGMKKNRPRRGSLAFSPRKRA.

Belongs to the universal ribosomal protein uL3 family. In terms of assembly, part of the 50S ribosomal subunit. Forms a cluster with proteins L14 and L24e.

Its function is as follows. One of the primary rRNA binding proteins, it binds directly near the 3'-end of the 23S rRNA, where it nucleates assembly of the 50S subunit. The sequence is that of Large ribosomal subunit protein uL3 from Methanococcus maripaludis (strain C5 / ATCC BAA-1333).